The primary structure comprises 271 residues: Formamidopyrimidine-DNA glycosylase (271 aa).

The active-site Schiff-base intermediate with DNA is Pro-2. Glu-3 functions as the Proton donor in the catalytic mechanism. Lys-56 serves as the catalytic Proton donor; for beta-elimination activity. Residues His-89, Arg-107, and Lys-151 each contribute to the DNA site. The FPG-type zinc-finger motif lies at 236–270; sequence NVYGRAGLQCRQCGTPVRLSRQGQRSTYFCPHCQR. Catalysis depends on Arg-260, which acts as the Proton donor; for delta-elimination activity.

This sequence belongs to the FPG family. In terms of assembly, monomer. It depends on Zn(2+) as a cofactor.

The enzyme catalyses Hydrolysis of DNA containing ring-opened 7-methylguanine residues, releasing 2,6-diamino-4-hydroxy-5-(N-methyl)formamidopyrimidine.. The catalysed reaction is 2'-deoxyribonucleotide-(2'-deoxyribose 5'-phosphate)-2'-deoxyribonucleotide-DNA = a 3'-end 2'-deoxyribonucleotide-(2,3-dehydro-2,3-deoxyribose 5'-phosphate)-DNA + a 5'-end 5'-phospho-2'-deoxyribonucleoside-DNA + H(+). Functionally, involved in base excision repair of DNA damaged by oxidation or by mutagenic agents. Acts as a DNA glycosylase that recognizes and removes damaged bases. Has a preference for oxidized purines, such as 7,8-dihydro-8-oxoguanine (8-oxoG). Has AP (apurinic/apyrimidinic) lyase activity and introduces nicks in the DNA strand. Cleaves the DNA backbone by beta-delta elimination to generate a single-strand break at the site of the removed base with both 3'- and 5'-phosphates. The sequence is that of Formamidopyrimidine-DNA glycosylase from Acidovorax ebreus (strain TPSY) (Diaphorobacter sp. (strain TPSY)).